Reading from the N-terminus, the 63-residue chain is Sec-independent protein translocase protein TatA (63 aa).

A helical membrane pass occupies residues 1–21 (MGSFSMWHWLIVLVIVLLLFG). The segment at 42–63 (GMTDDDAPDTAKTVDHKADETK) is disordered. A compositionally biased stretch (basic and acidic residues) spans 53–63 (KTVDHKADETK).

The protein belongs to the TatA/E family. In terms of assembly, the Tat system comprises two distinct complexes: a TatABC complex, containing multiple copies of TatA, TatB and TatC subunits, and a separate TatA complex, containing only TatA subunits. Substrates initially bind to the TatABC complex, which probably triggers association of the separate TatA complex to form the active translocon.

It is found in the cell inner membrane. Functionally, part of the twin-arginine translocation (Tat) system that transports large folded proteins containing a characteristic twin-arginine motif in their signal peptide across membranes. TatA could form the protein-conducting channel of the Tat system. This is Sec-independent protein translocase protein TatA from Rhizobium etli (strain CIAT 652).